The primary structure comprises 30 residues: Ampulexin 3 (30 aa).

Residues 1–17 (MKAIMVLFYVMTLTIIG) form the signal peptide.

As to quaternary structure, monomer. Expressed in venom sac and, to a lesser extent, in venom gland. Not expressed in brain.

The protein localises to the secreted. The chain is Ampulexin 3 from Ampulex compressa (Emerald cockroach wasp).